The following is a 206-amino-acid chain: Dephospho-CoA kinase (206 aa).

The region spanning 4-200 is the DPCK domain; the sequence is IVALTGGIGS…HRYLKLATAA (197 aa). An ATP-binding site is contributed by 12 to 17; that stretch reads GSGKST.

This sequence belongs to the CoaE family.

The protein localises to the cytoplasm. It carries out the reaction 3'-dephospho-CoA + ATP = ADP + CoA + H(+). It participates in cofactor biosynthesis; coenzyme A biosynthesis; CoA from (R)-pantothenate: step 5/5. Its function is as follows. Catalyzes the phosphorylation of the 3'-hydroxyl group of dephosphocoenzyme A to form coenzyme A. The polypeptide is Dephospho-CoA kinase (Yersinia pestis).